A 480-amino-acid chain; its full sequence is Krueppel-like factor 10 (480 aa).

A compositionally biased stretch (polar residues) spans 1–12; sequence MLNFGASLQQAS. 3 disordered regions span residues 1-32, 64-83, and 97-146; these read MLNFGASLQQASEGKMELISEKSKEGAHPWDK, VTPVSDTSEEDSLLPGTPDL, and PSDF…APPL. The segment covering 14–32 has biased composition (basic and acidic residues); sequence GKMELISEKSKEGAHPWDK. S183 is subject to Phosphoserine. The interval 202 to 222 is disordered; sequence AAVSPNRPKPEPSTAANGAEK. S249 carries the post-translational modification Phosphoserine. C2H2-type zinc fingers lie at residues 369 to 393, 399 to 423, and 429 to 451; these read HICSHPGCGKTYFKSSHLKAHVRTH, FSCSWKGCERRFARSDELSRHRRTH, and FACPMCDRRFMRSDHLTKHARRH.

The protein belongs to the Sp1 C2H2-type zinc-finger protein family. Post-translationally, ubiquitinated; mediated by SIAH1 and leading to its subsequent proteasomal degradation.

The protein localises to the nucleus. Its function is as follows. Transcriptional repressor which binds to the consensus sequence 5'-GGTGTG-3'. Regulates the circadian expression of genes involved in lipogenesis, gluconeogenesis, and glycolysis in the liver. Represses the expression of PCK2, a rate-limiting step enzyme of gluconeogenesis. May play a role in the cell cycle regulation. Plays a role in the regulation of the circadian clock; binds to the GC box sequence in the promoter of the core clock component ARTNL/BMAL1 and represses its transcriptional activity. The protein is Krueppel-like factor 10 (Klf10) of Rattus norvegicus (Rat).